The chain runs to 262 residues: MLSNLVVTKQKVVLVIDELNRERIAPKFIGSLLHEQGQGADTIKALPTGVSLKHVATFEALIDKYANNNTGSTTDSNSTGFNVILPTLADLLCYQTPAFIFGFLNRLRRSDNVRRVFLWASPQHLQDPHADYILAGCEYLAELVLRLESDKLLSLISRKPGGGVSNRRYSCEVSKTQFKVTPLDGGLPAGASPKQPSPEAEQTTEPASSTFKIELDEDEVLARNALTLPYERTSEPSEGNIIYTPDADDDFDEEDPDEDLCI.

2 disordered regions span residues 181–214 (TPLDGGLPAGASPKQPSPEAEQTTEPASSTFKIE) and 229–262 (PYERTSEPSEGNIIYTPDADDDFDEEDPDEDLCI). Positions 200–211 (AEQTTEPASSTF) are enriched in polar residues. Residues 246–262 (DADDDFDEEDPDEDLCI) are compositionally biased toward acidic residues.

The protein belongs to the ELP5 family. In terms of assembly, component of the elongator complex composed of Elp1, Elp2, Elp3, Elp4, Elp5 and Elp6. The elongator complex associates with and stabilizes microtubules; efficient interaction requires the full complex.

It localises to the cytoplasm. The protein localises to the nucleus. The protein resides in the cytoskeleton. It is found in the spindle. The protein operates within tRNA modification; 5-methoxycarbonylmethyl-2-thiouridine-tRNA biosynthesis. Its function is as follows. Component of the elongator complex, which is required for multiple tRNA modifications, including mcm5U (5-methoxycarbonylmethyl uridine), mcm5s2U (5-methoxycarbonylmethyl-2-thiouridine), and ncm5U (5-carbamoylmethyl uridine). The elongator complex catalyzes the formation of carboxymethyluridine in the wobble base at position 34 in tRNAs. Binding by the elongator complex stabilizes microtubules and promotes their growth. This induces central spindle asymmetry, promoting polarized signaling endosome trafficking during asymmetric cell division and cell fate assignation of sensory organ precursor cells. The chain is Elongator complex protein 5 from Drosophila melanogaster (Fruit fly).